A 154-amino-acid chain; its full sequence is Ascorbate-specific PTS system EIIA component (154 aa).

The PTS EIIA type-2 domain occupies 6–150; it reads SLAENNSIRL…QEVLDLIDRT (145 aa). Catalysis depends on H68, which acts as the Tele-phosphohistidine intermediate. H68 carries the post-translational modification Phosphohistidine.

It is found in the cytoplasm. The phosphoenolpyruvate-dependent sugar phosphotransferase system (sugar PTS), a major carbohydrate active transport system, catalyzes the phosphorylation of incoming sugar substrates concomitantly with their translocation across the cell membrane. The enzyme II UlaABC PTS system is involved in ascorbate transport. The sequence is that of Ascorbate-specific PTS system EIIA component (ulaC) from Salmonella typhi.